Reading from the N-terminus, the 237-residue chain is Phosphatidylserine decarboxylase proenzyme (237 aa).

S206 acts as the Schiff-base intermediate with substrate; via pyruvic acid in catalysis. Position 206 is a pyruvic acid (Ser); by autocatalysis (S206).

This sequence belongs to the phosphatidylserine decarboxylase family. PSD-A subfamily. As to quaternary structure, heterodimer of a large membrane-associated beta subunit and a small pyruvoyl-containing alpha subunit. Pyruvate serves as cofactor. Post-translationally, is synthesized initially as an inactive proenzyme. Formation of the active enzyme involves a self-maturation process in which the active site pyruvoyl group is generated from an internal serine residue via an autocatalytic post-translational modification. Two non-identical subunits are generated from the proenzyme in this reaction, and the pyruvate is formed at the N-terminus of the alpha chain, which is derived from the carboxyl end of the proenzyme. The post-translation cleavage follows an unusual pathway, termed non-hydrolytic serinolysis, in which the side chain hydroxyl group of the serine supplies its oxygen atom to form the C-terminus of the beta chain, while the remainder of the serine residue undergoes an oxidative deamination to produce ammonia and the pyruvoyl prosthetic group on the alpha chain.

It localises to the cell membrane. It carries out the reaction a 1,2-diacyl-sn-glycero-3-phospho-L-serine + H(+) = a 1,2-diacyl-sn-glycero-3-phosphoethanolamine + CO2. Its pathway is phospholipid metabolism; phosphatidylethanolamine biosynthesis; phosphatidylethanolamine from CDP-diacylglycerol: step 2/2. In terms of biological role, catalyzes the formation of phosphatidylethanolamine (PtdEtn) from phosphatidylserine (PtdSer). The protein is Phosphatidylserine decarboxylase proenzyme of Rhodococcus jostii (strain RHA1).